A 301-amino-acid polypeptide reads, in one-letter code: Coiled-coil domain-containing protein 69-B (301 aa).

A disordered region spans residues methionine 1–glutamate 43. Glycine 2 is lipidated: N-myristoyl glycine. A compositionally biased stretch (polar residues) spans proline 26 to proline 41. Coiled coils occupy residues asparagine 42 to serine 167 and lysine 213 to arginine 281.

The protein belongs to the CCDC69 family.

It localises to the cytoplasm. The protein localises to the cytoskeleton. The protein resides in the spindle. Its subcellular location is the midbody. Its function is as follows. May act as a scaffold to regulate the recruitment and assembly of spindle midzone components. The protein is Coiled-coil domain-containing protein 69-B (ccdc69-b) of Xenopus laevis (African clawed frog).